Reading from the N-terminus, the 255-residue chain is Myogenic factor 5 (255 aa).

Positions 83 to 134 (DRRKAATMRERRRLKKVNQAFETLKRCTTTNPNQRLPKVEILRNAIQYIESL) constitute a bHLH domain. The span at 221 to 242 (SLPIPDSITPSPTSSTDSLPRS) shows a compositional bias: low complexity. Positions 221 to 246 (SLPIPDSITPSPTSSTDSLPRSPDAH) are disordered.

As to quaternary structure, efficient DNA binding requires dimerization with another bHLH protein.

Its subcellular location is the nucleus. Functionally, acts as a transcriptional activator that promotes transcription of muscle-specific target genes and plays a role in muscle differentiation. Induces fibroblasts to differentiate into myoblasts. Probable sequence specific DNA-binding protein. This chain is Myogenic factor 5 (myf5), found in Xenopus laevis (African clawed frog).